The chain runs to 281 residues: INSIG family protein (281 aa).

The Cytoplasmic segment spans residues 1–93; the sequence is MSRKEIYEPR…FIDYSSLITF (93 aa). Phosphoserine is present on serine 28. The chain crosses the membrane as a helical span at residues 94–120; sequence FCKLCVIFGLGFVFTYLAEQIVQDAKL. Residues 121–134 lie on the Lumenal side of the membrane; that stretch reads PLLTVNLKSWKFEP. The chain crosses the membrane as a helical span at residues 135-159; sequence PWPAIFGFVAVILGLSYRRMDTKYP. The Cytoplasmic portion of the chain corresponds to 160–170; the sequence is LGAAPLRPSQS. A helical transmembrane segment spans residues 171–186; that stretch reads SKWQWISRYLAAFATL. The Lumenal segment spans residues 187-189; sequence LLS. The chain crosses the membrane as a helical span at residues 190–215; the sequence is MKKLLFISNSHSIVALVASSASIWYI. Over 216–221 the chain is Cytoplasmic; that stretch reads FDRSRN. A helical membrane pass occupies residues 222–256; the sequence is GIILSTITSVLGSILYYNLVDTSKIELNGVEFPEI. Residues 257–260 are Lumenal-facing; it reads QFRL. Residues 261–281 form a helical membrane-spanning segment; it reads WIPMILFSASTIVGNAGRLLF.

Belongs to the INSIG family.

It localises to the endoplasmic reticulum membrane. The polypeptide is INSIG family protein (ins1) (Schizosaccharomyces pombe (strain 972 / ATCC 24843) (Fission yeast)).